The primary structure comprises 90 residues: Small ribosomal subunit protein uS19 (90 aa).

It belongs to the universal ribosomal protein uS19 family.

Its function is as follows. Protein S19 forms a complex with S13 that binds strongly to the 16S ribosomal RNA. This Nitrosococcus oceani (strain ATCC 19707 / BCRC 17464 / JCM 30415 / NCIMB 11848 / C-107) protein is Small ribosomal subunit protein uS19.